Reading from the N-terminus, the 456-residue chain is MCPGLWGTCFWLWGSLLWLSIGRSGNVPPTTQPKCTDFQSANLLRGTNLKVQFLLFTPSDPGCGQLVEEDSDIRNSEFNASLGTKLIIHGFRALGTKPSWINKFIRALLRAADANVIAVDWVYGSTGMYFSAVENVVKLSLEISRFLSKLLELGVSESSIHIIGVSLGAHVGGMVGHFYKGQLGRITGLDPAGPEYTRASLEERLDSGDALFVEAIHTDTDNLGIRIPVGHVDYFVNGGQDQPGCPAFIHAGYSYLICDHMRAVHLYISALENTCPLMAFPCASYKAFLAGDCLDCFNPFLLSCPRIGLVERGGVKIEPLPKEVRVYLQTTSSAPYCVHHSLVEFNLKEKRKKDTSIEVTFLGNNVTSSVKITIPKDHLEGRGIIAHQNPHCQINQVKLKFHISSRVWRKDRTPIVGTFCTAPLPVNDSKKTVCIPEPVRLQVSMAVLRDLKMACV.

An N-terminal signal peptide occupies residues 1 to 24; sequence MCPGLWGTCFWLWGSLLWLSIGRS. The Nucleophile role is filled by serine 166. Aspartate 190 serves as the catalytic Charge relay system. Cysteine 245 and cysteine 258 are disulfide-bonded. Histidine 260 serves as the catalytic Charge relay system. 2 disulfide bridges follow: cysteine 282-cysteine 293 and cysteine 296-cysteine 304. An N-linked (GlcNAc...) asparagine glycan is attached at asparagine 365.

It belongs to the AB hydrolase superfamily. Lipase family.

It is found in the secreted. The catalysed reaction is a 1,2-diacyl-sn-glycero-3-phospho-L-serine + H2O = a 2-acyl-sn-glycero-3-phospho-L-serine + a fatty acid + H(+). It carries out the reaction 1,2-di-(9Z)-octadecenoyl-sn-glycero-3-phospho-L-serine + H2O = 2-(9Z-octadecenoyl)-sn-glycero-3-phospho-L-serine + (9Z)-octadecenoate + H(+). The enzyme catalyses 1-hexadecanoyl-2-(5Z,8Z,11Z,14Z-eicosatetraenoyl)-sn-glycero-3-phospho-L-serine + H2O = 2-(5Z,8Z,11Z,14Z)-eicosatetraenoyl-sn-glycero-3-phospho-L-serine + hexadecanoate + H(+). It catalyses the reaction a 1-acyl-sn-glycero-3-phospho-L-serine + H2O = sn-glycero-3-phospho-L-serine + a fatty acid + H(+). The catalysed reaction is 1-(9Z-octadecenoyl)-sn-glycero-3-phospho-L-serine + H2O = sn-glycero-3-phospho-L-serine + (9Z)-octadecenoate + H(+). Functionally, hydrolyzes the ester bond of the acyl group attached at the sn-1 position of phosphatidylserines (phospholipase A1 activity) and 1-acyl-2-lysophosphatidylserines (lysophospholipase activity) in the pathway of phosphatidylserines acyl chain remodeling. Cleaves phosphatidylserines exposed on the outer leaflet of the plasma membrane of apoptotic cells producing 2-acyl-1-lysophosphatidylserines, which in turn enhance mast cell activation and histamine production. Has no activity toward other glycerophospholipids including phosphatidylcholines, phosphatidylethanolamines, phosphatidic acids or phosphatidylinositols, or glycerolipids such as triolein. The sequence is that of Phospholipase A1 member A from Rattus norvegicus (Rat).